The primary structure comprises 315 residues: Probable carboxylesterase 3 (315 aa).

Methionine 1 bears the N-acetylmethionine mark. Residues 81-83 carry the Involved in the stabilization of the negatively charged intermediate by the formation of the oxyanion hole motif; it reads HGG. Catalysis depends on residues serine 160, aspartate 258, and histidine 290.

This sequence belongs to the 'GDXG' lipolytic enzyme family. As to expression, expressed in flowers and siliques.

The catalysed reaction is a carboxylic ester + H2O = an alcohol + a carboxylate + H(+). In terms of biological role, carboxylesterase acting on esters with varying acyl chain length. The chain is Probable carboxylesterase 3 (CXE3) from Arabidopsis thaliana (Mouse-ear cress).